A 316-amino-acid chain; its full sequence is MTNEFHHVTVLLHEAVDMLDIKPDGIYVDATLGGSGHSAYLLSLLGDKGHLYCFDQDQKAIDHAQEQLKPYIDKGQVTFIKDNFRHLKVRLLEHGVTEIDGILYDLGVSSPQLDERERGFSYKQDAPLDMRMDSQAALTAYEVVNTYDFNDLVRIFFKYGEDKFSKQIARKIEQARAIKPISTTTELAALIKSAKPAKELKKKGHPAKQIFQAIRIEVNDELGAADASIQQAIELLALDGRISVITFHSLEDRLTKHLFKEASTADAPKGLPFIPDELKPKLELVSRKPILPSQKELMANNRAHSAKLRVARKVRK.

S-adenosyl-L-methionine is bound by residues 35–37 (SGH), Asp55, Phe84, Asp105, and Gln112.

It belongs to the methyltransferase superfamily. RsmH family.

It localises to the cytoplasm. The catalysed reaction is cytidine(1402) in 16S rRNA + S-adenosyl-L-methionine = N(4)-methylcytidine(1402) in 16S rRNA + S-adenosyl-L-homocysteine + H(+). In terms of biological role, specifically methylates the N4 position of cytidine in position 1402 (C1402) of 16S rRNA. The chain is Ribosomal RNA small subunit methyltransferase H from Streptococcus equi subsp. zooepidemicus (strain H70).